The sequence spans 162 residues: Phosphopantetheine adenylyltransferase (162 aa).

Threonine 10 is a binding site for substrate. Residues 10–11 and histidine 18 each bind ATP; that span reads TF. 3 residues coordinate substrate: lysine 42, leucine 74, and arginine 88. Residues 89 to 91, glutamate 99, and 124 to 130 each bind ATP; these read GLR and FSCISST.

Belongs to the bacterial CoaD family. As to quaternary structure, homohexamer. The cofactor is Mg(2+).

The protein resides in the cytoplasm. The enzyme catalyses (R)-4'-phosphopantetheine + ATP + H(+) = 3'-dephospho-CoA + diphosphate. It functions in the pathway cofactor biosynthesis; coenzyme A biosynthesis; CoA from (R)-pantothenate: step 4/5. Functionally, reversibly transfers an adenylyl group from ATP to 4'-phosphopantetheine, yielding dephospho-CoA (dPCoA) and pyrophosphate. The polypeptide is Phosphopantetheine adenylyltransferase (Francisella tularensis subsp. mediasiatica (strain FSC147)).